Here is a 579-residue protein sequence, read N- to C-terminus: MKIFVPLLSFLLAGLTTGLDWWEHGNFYQVYPRSFKDSDGDGIGDLDGVTEKLKYLKDIGMDGVWLSPIFSSPMADFGYDISNFREIQTEYGDLDAFQRLSDKCKQLGLHLILDFVPNHTSDQHEYFKKSVQKDETYKDFYVWHPGVHGPNNTKVPPSNWISVFRGSSWEWNEERQEFYLHQFLKEQPDLNYRNPAVVEEMKNVLRYWLDRGVSGFRIDAVPYLFESDIIDGRYRNEPESRTTDDPENPAYLVHTQTMDQPETYDMIYQWRAVLDEYSKTDNRTRIMMTEGYTSLPKIIEFFGNATANGAQIPFNFEVISNVKKNSTGADFATYVKRWLDAKPANRRSNWVLGNHDNNRLGSRLGENKIDLYNIALQTLPDIAVTYYGEEIGMLDQWIPWNETVDPAACRSDEASYSAYSRDPARTPMQWDSGKNAGFSKAAKTWLPVADNYKTLNVKIQDRARKSHLKIFKKLTKYRKRQILTEGDIDIKVSGENLLVYKRKVDKVGYVVVALNFGTEPVALGLSSLFDRADQRMQVVVSSNRVSTPDNVWVDVDNYVLIGESGIVLQYLWGKNPIVS.

A signal peptide spans 1 to 18; the sequence is MKIFVPLLSFLLAGLTTG. 6 residues coordinate Ca(2+): aspartate 37, aspartate 39, aspartate 41, isoleucine 43, aspartate 45, and asparagine 118. N-linked (GlcNAc...) asparagine glycans are attached at residues asparagine 118 and asparagine 151. Aspartate 189 is a binding site for Ca(2+). Aspartate 219 acts as the Nucleophile in catalysis. Residues tyrosine 223, leucine 224, and glutamate 226 each coordinate Ca(2+). An N-linked (GlcNAc...) asparagine glycan is attached at asparagine 282. Glutamate 290 (proton donor) is an active-site residue. N-linked (GlcNAc...) asparagine glycosylation is found at asparagine 304, asparagine 325, and asparagine 401. An N-acetyl-beta-D-glucosamine-binding site is contributed by asparagine 325.

This sequence belongs to the glycosyl hydrolase 13 family. As to expression, saliva (at protein level). Proximal lateral lobes of the salivary gland (at protein level).

The protein localises to the secreted. It catalyses the reaction Hydrolysis of terminal, non-reducing (1-&gt;4)-linked alpha-D-glucose residues with release of alpha-D-glucose.. Its function is as follows. Functions as a glucosidase that shows high activity toward sucrose, a major component of nectar. Assists the mosquito in its sugar-feeding capabilities. In Aedes aegypti (Yellowfever mosquito), this protein is Salivary alpha-glucosidase.